The chain runs to 1028 residues: Pro-apoptotic serine protease nma111 (1028 aa).

Residues 1-46 are disordered; it reads MDLNGETSTKRKRSSVAAPAERPAKHLKPESSTLTPGDATPANGTV. A serine protease region spans residues 82-266; the sequence is VVSIHFCQTC…AATDYFLPLD (185 aa). Residues histidine 120, aspartate 151, and serine 233 each act as charge relay system in the active site. 2 PDZ domains span residues 305–377 and 876–957; these read PEWE…QRGG and VFCG…VTFD. Residues 989-1028 are disordered; that stretch reads TVSHDRDRHKDGITPDAANLNPDAMDEVYEEVSDVEPEVD. The segment covering 990–1001 has biased composition (basic and acidic residues); it reads VSHDRDRHKDGI. Residues 1012–1028 are compositionally biased toward acidic residues; the sequence is AMDEVYEEVSDVEPEVD.

This sequence belongs to the peptidase S1C family.

It is found in the nucleus. Its function is as follows. Nuclear serine protease which mediates apoptosis. In Neosartorya fischeri (strain ATCC 1020 / DSM 3700 / CBS 544.65 / FGSC A1164 / JCM 1740 / NRRL 181 / WB 181) (Aspergillus fischerianus), this protein is Pro-apoptotic serine protease nma111 (nma111).